Reading from the N-terminus, the 223-residue chain is MLSARDRRDRHPEEGVVAELQGFAVDKAFLTSHKGILLETELALTLIIFICFTASISAYMAAALLEFFITLAFLFLYATQYYQRFDRINWPCLLQGHGQSGGPHPLDLLSHSAKVQPQPWPGLTPPGWHTPAAVPWVPAPAPGFWSWLLWFICFHSLGSSDFLRCVSAIIIFLVVSFAAVTSRDGAAIAAFVFGIILVSIFAYDAFKIYRTEMAPGASQGDQQ.

Residues 29–213 (FLTSHKGILL…DAFKIYRTEM (185 aa)) enclose the MARVEL domain. 4 helical membrane passes run 35 to 55 (GILLETELALTLIIFICFTAS), 56 to 76 (ISAYMAAALLEFFITLAFLFL), 162 to 182 (FLRCVSAIIIFLVVSFAAVTS), and 186 to 206 (AAIAAFVFGIILVSIFAYDAF).

Belongs to the chemokine-like factor family. In terms of tissue distribution, highly expressed in the brain.

The protein localises to the membrane. This chain is CKLF-like MARVEL transmembrane domain-containing protein 5 (CMTM5), found in Homo sapiens (Human).